The chain runs to 142 residues: Ribonuclease VapC44 (142 aa).

The PINc domain occupies 4–126 (LLDVNVLLAL…GRFVTFDQSI (123 aa)). Residues Asp-6 and Asp-105 each contribute to the Mg(2+) site.

The protein belongs to the PINc/VapC protein family. It depends on Mg(2+) as a cofactor.

Its function is as follows. Toxic component of a type II toxin-antitoxin (TA) system. An RNase. Its cognate antitoxin is VapB44. This chain is Ribonuclease VapC44, found in Mycobacterium tuberculosis (strain CDC 1551 / Oshkosh).